Reading from the N-terminus, the 366-residue chain is tRNA-specific 2-thiouridylase MnmA (366 aa).

ATP contacts are provided by residues 6–13 (AMSGGVDS) and Leu32. Residue Cys101 is the Nucleophile of the active site. Residues Cys101 and Cys198 are joined by a disulfide bond. Gly125 is an ATP binding site. The tract at residues 148–150 (KDQ) is interaction with tRNA. The active-site Cysteine persulfide intermediate is Cys198.

Belongs to the MnmA/TRMU family.

The protein resides in the cytoplasm. The enzyme catalyses S-sulfanyl-L-cysteinyl-[protein] + uridine(34) in tRNA + AH2 + ATP = 2-thiouridine(34) in tRNA + L-cysteinyl-[protein] + A + AMP + diphosphate + H(+). In terms of biological role, catalyzes the 2-thiolation of uridine at the wobble position (U34) of tRNA, leading to the formation of s(2)U34. The sequence is that of tRNA-specific 2-thiouridylase MnmA from Nocardioides sp. (strain ATCC BAA-499 / JS614).